The chain runs to 513 residues: Maturase K (513 aa).

It belongs to the intron maturase 2 family. MatK subfamily.

The protein localises to the plastid. It is found in the chloroplast. Usually encoded in the trnK tRNA gene intron. Probably assists in splicing its own and other chloroplast group II introns. The chain is Maturase K from Arundo donax (Giant reed).